The chain runs to 373 residues: Bifunctional enzyme IspD/IspF (373 aa).

The tract at residues 1 to 212 (MPDITLILLG…PCIEAPSGKT (212 aa)) is 2-C-methyl-D-erythritol 4-phosphate cytidylyltransferase. The 2-C-methyl-D-erythritol 2,4-cyclodiphosphate synthase stretch occupies residues 213–373 (LTGFGLDIHP…NLTYYNWKQK (161 aa)). The a divalent metal cation site is built by aspartate 219 and histidine 221. 4-CDP-2-C-methyl-D-erythritol 2-phosphate-binding positions include 219–221 (DIH) and 245–246 (HS). Residue histidine 253 participates in a divalent metal cation binding. 4-CDP-2-C-methyl-D-erythritol 2-phosphate-binding positions include 267 to 269 (DIG), 272 to 276 (YPDTD), 343 to 346 (TTAE), phenylalanine 350, and arginine 353.

This sequence in the N-terminal section; belongs to the IspD/TarI cytidylyltransferase family. IspD subfamily. The protein in the C-terminal section; belongs to the IspF family. A divalent metal cation is required as a cofactor.

The enzyme catalyses 2-C-methyl-D-erythritol 4-phosphate + CTP + H(+) = 4-CDP-2-C-methyl-D-erythritol + diphosphate. It carries out the reaction 4-CDP-2-C-methyl-D-erythritol 2-phosphate = 2-C-methyl-D-erythritol 2,4-cyclic diphosphate + CMP. It functions in the pathway isoprenoid biosynthesis; isopentenyl diphosphate biosynthesis via DXP pathway; isopentenyl diphosphate from 1-deoxy-D-xylulose 5-phosphate: step 2/6. Its pathway is isoprenoid biosynthesis; isopentenyl diphosphate biosynthesis via DXP pathway; isopentenyl diphosphate from 1-deoxy-D-xylulose 5-phosphate: step 4/6. In terms of biological role, bifunctional enzyme that catalyzes the formation of 4-diphosphocytidyl-2-C-methyl-D-erythritol from CTP and 2-C-methyl-D-erythritol 4-phosphate (MEP) (IspD), and catalyzes the conversion of 4-diphosphocytidyl-2-C-methyl-D-erythritol 2-phosphate (CDP-ME2P) to 2-C-methyl-D-erythritol 2,4-cyclodiphosphate (ME-CPP) with a corresponding release of cytidine 5-monophosphate (CMP) (IspF). The chain is Bifunctional enzyme IspD/IspF from Sulfurovum sp. (strain NBC37-1).